The primary structure comprises 476 residues: Oogenesin-2 (476 aa).

The LRR 1; degenerate repeat unit spans residues Arg97 to Gly121. Residues His176–His200 form an LRR 2; degenerate repeat. Residues Ala201 to Gln226 form an LRR 3; degenerate repeat. An LRR 4; degenerate repeat occupies Met227 to Thr264. LRR repeat units follow at residues Phe265–Leu285, Lys286–Arg317, Arg342–Gln369, and Cys370–His394.

Belongs to the PRAME family. In terms of tissue distribution, expressed in ovary, specifically in oocytes. Detected in follicles with two layers of granulosa cells, and are present in early as well as large antral follicles.

The protein is Oogenesin-2 of Mus musculus (Mouse).